A 213-amino-acid polypeptide reads, in one-letter code: Kynurenine formamidase (213 aa).

Tryptophan 20 is a substrate binding site. Zn(2+) contacts are provided by histidine 50, histidine 54, and aspartate 56. Histidine 60 functions as the Proton donor/acceptor in the catalytic mechanism. Zn(2+)-binding residues include histidine 161 and glutamate 173.

This sequence belongs to the Cyclase 1 superfamily. KynB family. In terms of assembly, homodimer. It depends on Zn(2+) as a cofactor.

The enzyme catalyses N-formyl-L-kynurenine + H2O = L-kynurenine + formate + H(+). It participates in amino-acid degradation; L-tryptophan degradation via kynurenine pathway; L-kynurenine from L-tryptophan: step 2/2. In terms of biological role, catalyzes the hydrolysis of N-formyl-L-kynurenine to L-kynurenine, the second step in the kynurenine pathway of tryptophan degradation. The sequence is that of Kynurenine formamidase from Pseudomonas paraeruginosa (strain DSM 24068 / PA7) (Pseudomonas aeruginosa (strain PA7)).